The sequence spans 581 residues: Zinc metalloproteinase nas-36 (581 aa).

The propeptide occupies 1–95; it reads MKEIAHSQAY…FRGANEKGKR (95 aa). N-linked (GlcNAc...) asparagine glycosylation occurs at Asn-67. Residues 97–290 enclose the Peptidase M12A domain; it reads AAEYDAKWFQ…IKLINEAYCK (194 aa). 5 cysteine pairs are disulfide-bonded: Cys-137–Cys-289, Cys-159–Cys-178, Cys-293–Cys-313, Cys-315–Cys-324, and Cys-336–Cys-364. A Zn(2+)-binding site is contributed by His-186. Glu-187 is an active-site residue. Zn(2+) contacts are provided by His-190 and His-196. The 41-residue stretch at 285–325 folds into the EGF-like domain; sequence NEAYCKGDCKEKNECKNGGYLNPSNCQSCLCPSGFGGSKCE. In terms of domain architecture, CUB spans 336 to 449; the sequence is CGGTLKAIID…TGFKLKFRKT (114 aa). Asn-418 is a glycosylation site (N-linked (GlcNAc...) asparagine). Residues 474 to 523 enclose the TSP type-1 domain; it reads NDIWSEWGEWSQCSRSCGACGIKSRLRICKTAQCSGKVQQFLTCNLQACP. Intrachain disulfides connect Cys-486–Cys-517, Cys-490–Cys-522, and Cys-502–Cys-507.

It depends on Zn(2+) as a cofactor.

It is found in the secreted. With respect to regulation, inhibited by 1,10-phenanthroline. In terms of biological role, metalloprotease. Involved in molting, a process during larval stages in which a new cuticle is formed and the old cuticle is shed. This is Zinc metalloproteinase nas-36 from Brugia malayi (Filarial nematode worm).